We begin with the raw amino-acid sequence, 336 residues long: Dihydroorotate dehydrogenase (quinone) (336 aa).

FMN-binding positions include A62–K66 and T86. K66 is a binding site for substrate. N111–F115 contacts substrate. Residues N139 and N172 each coordinate FMN. N172 contacts substrate. The active-site Nucleophile is S175. Position 177 (N177) interacts with substrate. FMN is bound by residues K217 and T245. N246–T247 is a substrate binding site. Residues G268, G297, and Y318–S319 each bind FMN.

It belongs to the dihydroorotate dehydrogenase family. Type 2 subfamily. Monomer. FMN is required as a cofactor.

The protein localises to the cell membrane. The enzyme catalyses (S)-dihydroorotate + a quinone = orotate + a quinol. It participates in pyrimidine metabolism; UMP biosynthesis via de novo pathway; orotate from (S)-dihydroorotate (quinone route): step 1/1. Functionally, catalyzes the conversion of dihydroorotate to orotate with quinone as electron acceptor. The polypeptide is Dihydroorotate dehydrogenase (quinone) (Vibrio vulnificus (strain CMCP6)).